A 470-amino-acid chain; its full sequence is ATP synthase subunit beta (470 aa).

157–164 (GGAGVGKT) provides a ligand contact to ATP.

Belongs to the ATPase alpha/beta chains family. F-type ATPases have 2 components, CF(1) - the catalytic core - and CF(0) - the membrane proton channel. CF(1) has five subunits: alpha(3), beta(3), gamma(1), delta(1), epsilon(1). CF(0) has three main subunits: a(1), b(2) and c(9-12). The alpha and beta chains form an alternating ring which encloses part of the gamma chain. CF(1) is attached to CF(0) by a central stalk formed by the gamma and epsilon chains, while a peripheral stalk is formed by the delta and b chains.

The protein resides in the cell inner membrane. It catalyses the reaction ATP + H2O + 4 H(+)(in) = ADP + phosphate + 5 H(+)(out). In terms of biological role, produces ATP from ADP in the presence of a proton gradient across the membrane. The catalytic sites are hosted primarily by the beta subunits. The protein is ATP synthase subunit beta of Geotalea uraniireducens (strain Rf4) (Geobacter uraniireducens).